Reading from the N-terminus, the 416-residue chain is Argininosuccinate synthase (416 aa).

ATP contacts are provided by residues 19–27 and alanine 46; that span reads AYSGGLDTS. L-citrulline is bound by residues tyrosine 97 and serine 102. Glycine 127 contacts ATP. 3 residues coordinate L-aspartate: threonine 129, asparagine 133, and aspartate 134. An L-citrulline-binding site is contributed by asparagine 133. Residues arginine 137, serine 188, serine 197, glutamate 273, and tyrosine 285 each contribute to the L-citrulline site.

This sequence belongs to the argininosuccinate synthase family. Type 1 subfamily. As to quaternary structure, homotetramer.

It is found in the cytoplasm. It catalyses the reaction L-citrulline + L-aspartate + ATP = 2-(N(omega)-L-arginino)succinate + AMP + diphosphate + H(+). It participates in amino-acid biosynthesis; L-arginine biosynthesis; L-arginine from L-ornithine and carbamoyl phosphate: step 2/3. The sequence is that of Argininosuccinate synthase from Granulibacter bethesdensis (strain ATCC BAA-1260 / CGDNIH1).